A 426-amino-acid polypeptide reads, in one-letter code: Glucan 1,3-beta-glucosidase (426 aa).

Residues 1–20 (MLYPRALLPAAVALASLVLA) form the signal peptide. Glutamate 208 acts as the Proton donor in catalysis. Cystine bridges form between cysteine 290–cysteine 416 and cysteine 315–cysteine 343. Glutamate 307 serves as the catalytic Nucleophile.

This sequence belongs to the glycosyl hydrolase 5 (cellulase A) family.

The protein localises to the secreted. It catalyses the reaction Successive hydrolysis of beta-D-glucose units from the non-reducing ends of (1-&gt;3)-beta-D-glucans, releasing alpha-glucose.. Functionally, beta-glucanases participate in the metabolism of beta-glucan, the main structural component of the cell wall. It could also function biosynthetically as a transglycosylase. The polypeptide is Glucan 1,3-beta-glucosidase (Blumeria graminis (Powdery mildew)).